A 275-amino-acid chain; its full sequence is MALVKTKPTSPGRRFVVKVVHPELHKGDPYAPLVESKNRINSRNNQGRITLRRRGGGHKRNYRIIDFKRDKEGIEGKVERLEYDPNRSAHIALVLYPDGERRYIIAPIGVHKGSKVVSGREAPIRPGNCLPLQNIPLGATIHNIELKPGKGAQLVRSAGASAQLAAKEGIYAIIRMRSGETRKILAVCRACIGEVSNSEHNLRSLGKAGAKRWRGRRPTVRGVAMNPVDHPHGGGEGKTSGGRHPVSPTGKPTKGYKTRRNKRTSNMIIRDRRKK.

Residues 208–275 (AGAKRWRGRR…NMIIRDRRKK (68 aa)) form a disordered region. 2 stretches are compositionally biased toward basic residues: residues 209 to 219 (GAKRWRGRRPT) and 254 to 263 (KGYKTRRNKR).

Belongs to the universal ribosomal protein uL2 family. Part of the 50S ribosomal subunit. Forms a bridge to the 30S subunit in the 70S ribosome.

Its function is as follows. One of the primary rRNA binding proteins. Required for association of the 30S and 50S subunits to form the 70S ribosome, for tRNA binding and peptide bond formation. It has been suggested to have peptidyltransferase activity; this is somewhat controversial. Makes several contacts with the 16S rRNA in the 70S ribosome. This chain is Large ribosomal subunit protein uL2, found in Coxiella burnetii (strain CbuK_Q154) (Coxiella burnetii (strain Q154)).